The following is a 266-amino-acid chain: Vitamin B12-binding protein (266 aa).

A signal peptide spans 1 to 22 (MVKQMFRALVALLLTLPVWLYA). Residues 25-266 (RVITLSPANT…QLCNALSQVN (242 aa)) form the Fe/B12 periplasmic-binding domain. Cyanocob(III)alamin is bound by residues Tyr-50 and 242–246 (DWFER). A disulfide bridge connects residues Cys-183 and Cys-259.

The protein belongs to the BtuF family. As to quaternary structure, the complex is composed of two ATP-binding proteins (BtuD), two transmembrane proteins (BtuC) and a solute-binding protein (BtuF).

Its subcellular location is the periplasm. Functionally, part of the ABC transporter complex BtuCDF involved in vitamin B12 import. Binds vitamin B12 and delivers it to the periplasmic surface of BtuC. This chain is Vitamin B12-binding protein, found in Salmonella choleraesuis (strain SC-B67).